An 80-amino-acid chain; its full sequence is Cytochrome c oxidase subunit 7B, mitochondrial (80 aa).

The transit peptide at Met-1–Gln-24 directs the protein to the mitochondrion. The Mitochondrial matrix portion of the chain corresponds to Ser-25–Asp-32. A helical transmembrane segment spans residues Phe-33–Gln-59. Residues Val-60–Gln-80 lie on the Mitochondrial intermembrane side of the membrane.

The protein belongs to the cytochrome c oxidase VIIb family. As to quaternary structure, component of the cytochrome c oxidase (complex IV, CIV), a multisubunit enzyme composed of 14 subunits. The complex is composed of a catalytic core of 3 subunits MT-CO1, MT-CO2 and MT-CO3, encoded in the mitochondrial DNA, and 11 supernumerary subunits COX4I1 (or COX4I2), COX5A, COX5B, COX6A1 (or COX6A2), COX6B1 (or COX6B2), COX6C, COX7A2 (or COX7A1), COX7B, COX7C, COX8A and NDUFA4, which are encoded in the nuclear genome. The complex exists as a monomer or a dimer and forms supercomplexes (SCs) in the inner mitochondrial membrane with NADH-ubiquinone oxidoreductase (complex I, CI) and ubiquinol-cytochrome c oxidoreductase (cytochrome b-c1 complex, complex III, CIII), resulting in different assemblies (supercomplex SCI(1)III(2)IV(1) and megacomplex MCI(2)III(2)IV(2)).

It is found in the mitochondrion inner membrane. Its pathway is energy metabolism; oxidative phosphorylation. Component of the cytochrome c oxidase, the last enzyme in the mitochondrial electron transport chain which drives oxidative phosphorylation. The respiratory chain contains 3 multisubunit complexes succinate dehydrogenase (complex II, CII), ubiquinol-cytochrome c oxidoreductase (cytochrome b-c1 complex, complex III, CIII) and cytochrome c oxidase (complex IV, CIV), that cooperate to transfer electrons derived from NADH and succinate to molecular oxygen, creating an electrochemical gradient over the inner membrane that drives transmembrane transport and the ATP synthase. Cytochrome c oxidase is the component of the respiratory chain that catalyzes the reduction of oxygen to water. Electrons originating from reduced cytochrome c in the intermembrane space (IMS) are transferred via the dinuclear copper A center (CU(A)) of subunit 2 and heme A of subunit 1 to the active site in subunit 1, a binuclear center (BNC) formed by heme A3 and copper B (CU(B)). The BNC reduces molecular oxygen to 2 water molecules using 4 electrons from cytochrome c in the IMS and 4 protons from the mitochondrial matrix. Plays a role in proper central nervous system (CNS) development in vertebrates. The polypeptide is Cytochrome c oxidase subunit 7B, mitochondrial (COX7B) (Homo sapiens (Human)).